A 361-amino-acid chain; its full sequence is Peptide chain release factor 1 (361 aa).

N5-methylglutamine is present on glutamine 235.

This sequence belongs to the prokaryotic/mitochondrial release factor family. Methylated by PrmC. Methylation increases the termination efficiency of RF1.

The protein resides in the cytoplasm. Peptide chain release factor 1 directs the termination of translation in response to the peptide chain termination codons UAG and UAA. The protein is Peptide chain release factor 1 of Rhodopseudomonas palustris (strain ATCC BAA-98 / CGA009).